The primary structure comprises 148 residues: Deoxyuridine 5'-triphosphate nucleotidohydrolase (148 aa).

Residues 67–69 (RSG), Asn-80, 84–86 (LID), and Met-94 contribute to the substrate site.

It belongs to the dUTPase family. Mg(2+) is required as a cofactor.

The catalysed reaction is dUTP + H2O = dUMP + diphosphate + H(+). It functions in the pathway pyrimidine metabolism; dUMP biosynthesis; dUMP from dCTP (dUTP route): step 2/2. In terms of biological role, this enzyme is involved in nucleotide metabolism: it produces dUMP, the immediate precursor of thymidine nucleotides and it decreases the intracellular concentration of dUTP so that uracil cannot be incorporated into DNA. In Burkholderia lata (strain ATCC 17760 / DSM 23089 / LMG 22485 / NCIMB 9086 / R18194 / 383), this protein is Deoxyuridine 5'-triphosphate nucleotidohydrolase.